We begin with the raw amino-acid sequence, 361 residues long: MKNLFLFCRAGFEKECAAEIQQRAGELNVGGFVKANNNDAYVVYQCFEDDAADTLVKQLPLDSLIFARQMFAASDLLVDLPENDRISPIVAALSDVSKAGEVRVETPDTNEAKELSAFCRKFTVPLRQHLKKSGSLLAQENPKRPIIHVCFIGPGRAYVGYSYSNNSSPHFMGIPRLKMAADAPSRSSLKLDEAFGQFVPKEEQEERIRSGMNAVDLGACPGGWTYQLVRRGMFVSAVDNGPMDEKLMETGQVKHYREDGFRFEPQRKNIYWLVCDMVEKPARVAELIEAWAINGWFKEAIFNLKLPMKSRYKEVTAILETMQTILKENGVTDFKVQCKHLYHDRDEVTVHLWLRPNTAWN.

S-adenosyl-L-methionine-binding positions include Ser-187, 220–223, Asp-239, Asp-259, and Asp-276; that span reads CPGG. Lys-305 functions as the Proton acceptor in the catalytic mechanism.

Belongs to the class I-like SAM-binding methyltransferase superfamily. RNA methyltransferase RlmE family. RlmM subfamily. As to quaternary structure, monomer.

It is found in the cytoplasm. It carries out the reaction cytidine(2498) in 23S rRNA + S-adenosyl-L-methionine = 2'-O-methylcytidine(2498) in 23S rRNA + S-adenosyl-L-homocysteine + H(+). In terms of biological role, catalyzes the 2'-O-methylation at nucleotide C2498 in 23S rRNA. The protein is Ribosomal RNA large subunit methyltransferase M of Shewanella sp. (strain W3-18-1).